A 163-amino-acid polypeptide reads, in one-letter code: Photosystem II extrinsic protein V (163 aa).

The first 26 residues, 1–26 (MLKRSSWLATLLGLLTVASVSTIVYA), serve as a signal peptide directing secretion. The heme c site is built by Cys-63, Cys-66, His-67, and His-118.

Belongs to the cytochrome c family. PsbV subfamily. In terms of assembly, PSII is composed of 1 copy each of membrane proteins PsbA, PsbB, PsbC, PsbD, PsbE, PsbF, PsbH, PsbI, PsbJ, PsbK, PsbL, PsbM, PsbT, PsbY, PsbZ, Psb30/Ycf12, at least 3 peripheral proteins of the oxygen-evolving complex and a large number of cofactors. It forms dimeric complexes. The extrinsic subunits in red algae are PsbO (OEC33), PsbQ', cytochrome c-550 and PsbU. Heme c is required as a cofactor.

The protein resides in the plastid. The protein localises to the chloroplast thylakoid membrane. One of the extrinsic, lumenal subunits of photosystem II (PSII). PSII is a light-driven water plastoquinone oxidoreductase, using light energy to abstract electrons from H(2)O, generating a proton gradient subsequently used for ATP formation. The extrinsic proteins stabilize the structure of photosystem II oxygen-evolving complex (OEC), the ion environment of oxygen evolution and protect the OEC against heat-induced inactivation. This Porphyra purpurea (Red seaweed) protein is Photosystem II extrinsic protein V.